A 283-amino-acid chain; its full sequence is 2-dehydro-3-deoxyphosphooctonate aldolase (283 aa).

The protein belongs to the KdsA family.

It localises to the cytoplasm. The enzyme catalyses D-arabinose 5-phosphate + phosphoenolpyruvate + H2O = 3-deoxy-alpha-D-manno-2-octulosonate-8-phosphate + phosphate. The protein operates within carbohydrate biosynthesis; 3-deoxy-D-manno-octulosonate biosynthesis; 3-deoxy-D-manno-octulosonate from D-ribulose 5-phosphate: step 2/3. It functions in the pathway bacterial outer membrane biogenesis; lipopolysaccharide biosynthesis. This Laribacter hongkongensis (strain HLHK9) protein is 2-dehydro-3-deoxyphosphooctonate aldolase.